Reading from the N-terminus, the 188-residue chain is MSIKSDRWIEKMALEHGMISPFQAGQVRENQNGRIISYGVSSYGYDVRCSNEFKIFTNINSAIVDPKAFDENSFVDVQSDVCIIPPNSFALARTVEYFRIPRNILTICLGKSTYARCGIIVNVTPLEPEWEGHVTLEFSNTTTLPAKIYAYEGVAQMLFLEANEVCAVSYRDRNGKYQGQTGVTLPRT.

Residues Lys-111–Arg-116, Thr-135–Glu-137, Gln-156, Tyr-170, and Gln-180 each bind dCTP. Glu-137 functions as the Proton donor/acceptor in the catalytic mechanism.

Belongs to the dCTP deaminase family. As to quaternary structure, homotrimer.

It carries out the reaction dCTP + H2O + H(+) = dUTP + NH4(+). It functions in the pathway pyrimidine metabolism; dUMP biosynthesis; dUMP from dCTP (dUTP route): step 1/2. In terms of biological role, catalyzes the deamination of dCTP to dUTP. This Legionella pneumophila (strain Paris) protein is dCTP deaminase.